Consider the following 73-residue polypeptide: Serine rich endogenous peptide 14 (73 aa).

Residues 1–31 form the signal peptide; that stretch reads MAAKTSNLVALLLSLFLLLLSISSQVGLGEA. Residues 44–73 are disordered; sequence VSHPSPPPPHRSMAPPIFVPPSTSHKGQGP. The short motif at 59–73 is the SCOOP motif element; the sequence is PIFVPPSTSHKGQGP. A compositionally biased stretch (polar residues) spans 64 to 73; the sequence is PSTSHKGQGP. A SxS motif essential for MIK2 binding motif is present at residues 65–67; it reads STS.

It belongs to the serine rich endogenous peptide (SCOOP) phytocytokine family. As to quaternary structure, interacts with MIK2 (via extracellular leucine-rich repeat domain); this interaction triggers the formation of complex between MIK2 and the BAK1/SERK3 and SERK4 coreceptors, and subsequent BAK1 activation by phosphorylation. In terms of tissue distribution, mostly expressed in seedlings shoots and leaves, and, to a lower extent, in roots, stems, siliques, seeds and flowers.

Its subcellular location is the cell membrane. The protein localises to the secreted. The protein resides in the extracellular space. It localises to the apoplast. Its function is as follows. Brassicaceae-specific phytocytokine (plant endogenous peptide released into the apoplast) perceived by MIK2 in a BAK1/SERK3 and SERK4 coreceptors-dependent manner, that modulates various physiological and antimicrobial processes including growth prevention and reactive oxygen species (ROS) response regulation. Inhibits root growth and regulates root meristems. Prevents general growth and development. Exhibits antibacterial effects against Pseudomonas syringae pv. tomato DC3000, Ralstonia solanacearum, Bacillus subtilis and Agrobacterium tumefaciens, thus being an antimicrobial peptide (AMP). This chain is Serine rich endogenous peptide 14, found in Arabidopsis thaliana (Mouse-ear cress).